The primary structure comprises 160 residues: S-ribosylhomocysteine lyase (160 aa).

Fe cation contacts are provided by histidine 57, histidine 61, and cysteine 127.

Belongs to the LuxS family. In terms of assembly, homodimer. Fe cation serves as cofactor.

The enzyme catalyses S-(5-deoxy-D-ribos-5-yl)-L-homocysteine = (S)-4,5-dihydroxypentane-2,3-dione + L-homocysteine. Functionally, involved in the synthesis of autoinducer 2 (AI-2) which is secreted by bacteria and is used to communicate both the cell density and the metabolic potential of the environment. The regulation of gene expression in response to changes in cell density is called quorum sensing. Catalyzes the transformation of S-ribosylhomocysteine (RHC) to homocysteine (HC) and 4,5-dihydroxy-2,3-pentadione (DPD). This chain is S-ribosylhomocysteine lyase, found in Streptococcus suis (strain 98HAH33).